The chain runs to 269 residues: Dynein regulatory complex protein 8 (269 aa).

The interval 1-113 (MLGPGQVRLR…RTGKGLGYNS (113 aa)) is disordered. The segment covering 54–76 (AQGSSSPGIQSGPSSRPGSPRGA) has biased composition (low complexity). 2 EF-hand domains span residues 150–185 (EFHK…LGCC) and 228–263 (IPED…EDGV).

This sequence belongs to the DRC8 family. As to quaternary structure, component of the nexin-dynein regulatory complex (N-DRC).

It is found in the cytoplasm. The protein localises to the cytoskeleton. Its subcellular location is the flagellum axoneme. Component of the nexin-dynein regulatory complex (N-DRC), a key regulator of ciliary/flagellar motility which maintains the alignment and integrity of the distal axoneme and regulates microtubule sliding in motile axonemes. The sequence is that of Dynein regulatory complex protein 8 (EFCAB2) from Homo sapiens (Human).